The primary structure comprises 487 residues: uncharacterized protein (487 aa).

The N-terminal stretch at 1–31 (MRFHRQGISAIIGVLLIVLLGFCWKLSGSYG) is a signal peptide. 8 N-linked (GlcNAc...) asparagine glycosylation sites follow: asparagine 40, asparagine 68, asparagine 150, asparagine 220, asparagine 304, asparagine 367, asparagine 442, and asparagine 448. A disordered region spans residues 141–176 (LERRHGRFGNGTNGDHPKGPPPPPPPPDEKGRGSQK).

In terms of processing, N-glycosylated.

This is an uncharacterized protein from Saccharomyces cerevisiae (strain ATCC 204508 / S288c) (Baker's yeast).